The sequence spans 432 residues: Vacuolar protein sorting-associated protein 38 (432 aa).

N20 carries N-linked (GlcNAc...) asparagine glycosylation. The stretch at L216 to K287 forms a coiled coil. Residues I348 to Y365 traverse the membrane as a helical segment.

This sequence belongs to the VPS38 family. As to quaternary structure, component of the VPS34 PI3-kinase complex II composed of VPS15, VPS30, VPS34 and VPS38.

It localises to the golgi apparatus. The protein localises to the trans-Golgi network membrane. The protein resides in the endosome membrane. Involved in endosome-to-Golgi retrograde transport as part of the VPS34 PI3-kinase complex II. This complex is required for the endosome-to-Golgi retrieval of PEP1 and KEX2, and the recruitment of VPS5 and VPS7, two components of the retromer complex, to endosomal membranes (probably through generating a specific pool of phosphatidylinositol 3-phosphate allowing the recruitment of the retromer complex proteins to the endosome). Mediates the interaction between VPS30 and the VPS34-VPS15 core complex, leading to the recruitment of VPS30 to the membrane. This Candida glabrata (strain ATCC 2001 / BCRC 20586 / JCM 3761 / NBRC 0622 / NRRL Y-65 / CBS 138) (Yeast) protein is Vacuolar protein sorting-associated protein 38.